Consider the following 563-residue polypeptide: Tripeptidyl-peptidase 1 (563 aa).

Residues 1 to 19 (MGLQACLLGLFALILSGKC) form the signal peptide. The propeptide at 20 to 195 (SYSPEPDQRR…PEPQVTGTVG (176 aa)) is removed in mature form. A disulfide bridge links cysteine 111 with cysteine 122. The 365-residue stretch at 199-563 (GVTPSVIRKR…PALLKTLLNP (365 aa)) folds into the Peptidase S53 domain. N-linked (GlcNAc...) asparagine glycans are attached at residues asparagine 210 and asparagine 222. Residues glutamate 272 and aspartate 276 each act as charge relay system in the active site. N-linked (GlcNAc...) asparagine glycosylation is found at asparagine 286, asparagine 313, and asparagine 443. 2 cysteine pairs are disulfide-bonded: cysteine 365–cysteine 526 and cysteine 522–cysteine 537. The active-site Charge relay system is serine 475. Residues aspartate 517 and valine 518 each coordinate Ca(2+). Ca(2+)-binding residues include glycine 539, glycine 541, and aspartate 543.

In terms of assembly, monomer. Interacts with CLN5. Interacts with CLN3. It depends on Ca(2+) as a cofactor. In terms of processing, activated by autocatalytic proteolytical processing upon acidification. N-glycosylation is required for processing and activity.

It localises to the lysosome. The protein resides in the melanosome. It catalyses the reaction Release of an N-terminal tripeptide from a polypeptide, but also has endopeptidase activity.. Its function is as follows. Lysosomal serine protease with tripeptidyl-peptidase I activity. May act as a non-specific lysosomal peptidase which generates tripeptides from the breakdown products produced by lysosomal proteinases. Requires substrates with an unsubstituted N-terminus. This chain is Tripeptidyl-peptidase 1 (TPP1), found in Pan troglodytes (Chimpanzee).